The primary structure comprises 244 residues: Phosphoadenosine 5'-phosphosulfate reductase (244 aa).

Cysteine 239 acts as the Nucleophile; cysteine thiosulfonate intermediate in catalysis.

It belongs to the PAPS reductase family. CysH subfamily.

It localises to the cytoplasm. It carries out the reaction [thioredoxin]-disulfide + sulfite + adenosine 3',5'-bisphosphate + 2 H(+) = [thioredoxin]-dithiol + 3'-phosphoadenylyl sulfate. Its pathway is sulfur metabolism; hydrogen sulfide biosynthesis; sulfite from sulfate: step 3/3. Its function is as follows. Catalyzes the formation of sulfite from phosphoadenosine 5'-phosphosulfate (PAPS) using thioredoxin as an electron donor. The chain is Phosphoadenosine 5'-phosphosulfate reductase from Yersinia enterocolitica serotype O:8 / biotype 1B (strain NCTC 13174 / 8081).